The chain runs to 1031 residues: Caprin-2 (1031 aa).

5 disordered regions span residues 1 to 27 (MKSA…QSTL), 364 to 458 (LQEE…SWEN), 500 to 520 (PKDV…LPKD), 605 to 658 (DQAS…SSEA), and 830 to 876 (RSGT…SMTP). Polar residues-rich tracts occupy residues 425-439 (VSVQ…SWTT) and 446-458 (ASVQ…SWEN). Residues 608–646 (SSGSETEFTTSETPEMVVSPCKPKPASALASPNPPLSKS) show a composition bias toward low complexity. Positions 830-853 (RSGTSSGLQANSRAGWSDSSQVSS) are enriched in polar residues. Phosphoserine occurs at positions 852 and 853. Residues 897–1031 (PQQMRVAFSA…TFSGYLLYQD (135 aa)) enclose the C1q domain. Residues aspartate 982 and glutamate 988 each coordinate Ca(2+).

The protein belongs to the caprin family. Homotrimer; via C1q domain. Found in a complex with LRP6, CCNY and CDK14 during G2/M stage; CAPRIN2 functions as a scaffold for the complex by binding to CCNY via its N terminus and to CDK14 via its C terminus. Interacts with LRP5. Interacts with LRP6. As to expression, specifically expressed in brain (at protein level).

Its subcellular location is the cytoplasm. The protein localises to the cell membrane. In terms of biological role, promotes phosphorylation of the Wnt coreceptor LRP6, leading to increased activity of the canonical Wnt signaling pathway. Facilitates constitutive LRP6 phosphorylation by CDK14/CCNY during G2/M stage of the cell cycle, which may potentiate cells for Wnt signaling. May regulate the transport and translation of mRNAs, modulating for instance the expression of proteins involved in synaptic plasticity in neurons. Involved in regulation of growth as erythroblasts shift from a highly proliferative state towards their terminal phase of differentiation. May be involved in apoptosis. In Mus musculus (Mouse), this protein is Caprin-2.